The following is a 258-amino-acid chain: Small ribosomal subunit protein uS2 (258 aa).

A disordered region spans residues 222–258; it reads GKALRDQDEAEQVEPVSQEEKDEVVAEAMSEADFEEQ.

This sequence belongs to the universal ribosomal protein uS2 family.

The sequence is that of Small ribosomal subunit protein uS2 from Campylobacter fetus subsp. fetus (strain 82-40).